The chain runs to 105 residues: Large ribosomal subunit protein uL24 (105 aa).

The protein belongs to the universal ribosomal protein uL24 family. As to quaternary structure, part of the 50S ribosomal subunit.

One of two assembly initiator proteins, it binds directly to the 5'-end of the 23S rRNA, where it nucleates assembly of the 50S subunit. Functionally, one of the proteins that surrounds the polypeptide exit tunnel on the outside of the subunit. The protein is Large ribosomal subunit protein uL24 of Xylella fastidiosa (strain M23).